The sequence spans 171 residues: Terminase, small subunit (171 aa).

Belongs to the P23virus small terminase family. Homononamer; forms a ring-like structure through which genomic DNA is translocated into the capsid. Heterodimer with the terminase large subunit; the active complex is probably heterooligomeric.

Functionally, the terminase small subunit binds to the packaging initiation site and regulates the ATPase activity of the terminase large subunit. The terminase lies at a unique vertex of the procapsid and is composed of two subunits, a small terminase subunit involved in viral DNA recognition (packaging sequence), and a large terminase subunit. Both terminase subunits heterooligomerize and are docked on the portal protein to form the packaging machine. The polypeptide is Terminase, small subunit (Thermus virus P23-45 (Thermus thermophilus phage P23-45)).